A 206-amino-acid chain; its full sequence is Recombination protein RecR (206 aa).

The C4-type zinc-finger motif lies at 60 to 75 (CAMCNTFCEGGLCDIC). Residues 83-178 (RRLMVVHMPA…KVSRLSQGIP (96 aa)) enclose the Toprim domain.

This sequence belongs to the RecR family.

In terms of biological role, may play a role in DNA repair. It seems to be involved in an RecBC-independent recombinational process of DNA repair. It may act with RecF and RecO. This is Recombination protein RecR from Neisseria meningitidis serogroup B (strain ATCC BAA-335 / MC58).